We begin with the raw amino-acid sequence, 161 residues long: Large ribosomal subunit protein uL15 (161 aa).

The interval 1–43 (MKLSEISDNPGARKKRMRIGRGIGSGKGKTGGRGGKGQTARSG) is disordered. Residues 21–37 (RGIGSGKGKTGGRGGKG) show a composition bias toward gly residues.

Belongs to the universal ribosomal protein uL15 family. Part of the 50S ribosomal subunit.

Its function is as follows. Binds to the 23S rRNA. The polypeptide is Large ribosomal subunit protein uL15 (Rhodopseudomonas palustris (strain BisB5)).